Reading from the N-terminus, the 658-residue chain is DNA mismatch repair protein MutL (658 aa).

The segment covering 114–130 (RQEDSSHATQVKAEDGK) has biased composition (basic and acidic residues). Residues 114–137 (RQEDSSHATQVKAEDGKLSSPTAA) are disordered.

It belongs to the DNA mismatch repair MutL/HexB family.

Its function is as follows. This protein is involved in the repair of mismatches in DNA. It is required for dam-dependent methyl-directed DNA mismatch repair. May act as a 'molecular matchmaker', a protein that promotes the formation of a stable complex between two or more DNA-binding proteins in an ATP-dependent manner without itself being part of a final effector complex. The chain is DNA mismatch repair protein MutL from Neisseria meningitidis serogroup C / serotype 2a (strain ATCC 700532 / DSM 15464 / FAM18).